A 100-amino-acid chain; its full sequence is Urease subunit gamma (100 aa).

It belongs to the urease gamma subunit family. Heterotrimer of UreA (gamma), UreB (beta) and UreC (alpha) subunits. Three heterotrimers associate to form the active enzyme.

The protein resides in the cytoplasm. The catalysed reaction is urea + 2 H2O + H(+) = hydrogencarbonate + 2 NH4(+). Its pathway is nitrogen metabolism; urea degradation; CO(2) and NH(3) from urea (urease route): step 1/1. This Staphylococcus saprophyticus subsp. saprophyticus (strain ATCC 15305 / DSM 20229 / NCIMB 8711 / NCTC 7292 / S-41) protein is Urease subunit gamma.